A 253-amino-acid chain; its full sequence is Transmembrane protein 69 (253 aa).

5 helical membrane passes run 104–124 (ALYL…LMNV), 137–157 (VAYG…FAIP), 165–185 (DWMN…ALLF), 192–212 (AAVL…ALLP), and 223–243 (AILT…SSVY).

It localises to the membrane. This Xenopus tropicalis (Western clawed frog) protein is Transmembrane protein 69 (tmem69).